Here is a 177-residue protein sequence, read N- to C-terminus: Nucleoside triphosphate/diphosphate phosphatase (177 aa).

The Proton donor role is filled by Arg-23. Asn-87, Asp-103, Asp-105, Asp-107, Asp-120, and Glu-123 together coordinate Mg(2+).

This sequence belongs to the Ntdp family. The cofactor is Mg(2+).

It catalyses the reaction a ribonucleoside 5'-triphosphate + H2O = a ribonucleoside 5'-diphosphate + phosphate + H(+). It carries out the reaction a ribonucleoside 5'-diphosphate + H2O = a ribonucleoside 5'-phosphate + phosphate + H(+). In terms of biological role, has nucleoside phosphatase activity towards nucleoside triphosphates and nucleoside diphosphates. This is Nucleoside triphosphate/diphosphate phosphatase from Enterococcus faecalis (strain ATCC 700802 / V583).